A 251-amino-acid chain; its full sequence is Insulin-induced gene 1 protein (251 aa).

Residues 1 to 58 lie on the Cytoplasmic side of the membrane; the sequence is MPRLEEHCWSCSCSTSVKTKDLSSAGWIVCKTGEMMSIITSVLSHAYGSLHSLQSANL. Residues 59–81 form a helical membrane-spanning segment; that stretch reads IRRGLVLFIVGVVLALVLNLLQI. Topologically, residues 82 to 100 are extracellular; it reads QRNVTLFPEEVLDTLFSSA. The chain crosses the membrane as a helical span at residues 101–118; it reads WWIPLCCGTAAAVVGLLY. The Cytoplasmic portion of the chain corresponds to 119–133; it reads PCLDHHLGEPHKFKR. A helical transmembrane segment spans residues 134 to 156; that stretch reads EWASVMRCIAVFVGINHASAKLD. Over 157–159 the chain is Extracellular; that stretch reads FAN. The helical transmembrane segment at 160–178 threads the bilayer; it reads NVQLSLTLAALSLGLWWTF. Residues 179 to 183 lie on the Cytoplasmic side of the membrane; sequence DRSRS. Residues 184–205 form a helical membrane-spanning segment; sequence GFGLGLTTALLATLIAQLLVYN. Over 206-219 the chain is Extracellular; it reads GIYQYTSPDFLYVR. A helical membrane pass occupies residues 220–237; the sequence is SWLPCIFFSGGVTVGNIG. Residues 238–251 are Cytoplasmic-facing; that stretch reads RQLAMGSTEKIHND. The KxHxx motif lies at 245-251; it reads TEKIHND.

The protein belongs to the INSIG family. In terms of assembly, interacts with scap; interaction is direct and only takes place in the presence of sterols; it prevents interaction between scap and the coat protein complex II (COPII). Associates with the SCAP-SREBP complex; association is mediated via its interaction with scap and only takes place in the presence of sterols.

Its subcellular location is the endoplasmic reticulum membrane. Functionally, oxysterol-binding protein that mediates feedback control of cholesterol synthesis by controlling both endoplasmic reticulum to Golgi transport of scap and degradation of hmgcr. Acts as a negative regulator of cholesterol biosynthesis by mediating the retention of the SCAP-SREBP complex in the endoplasmic reticulum, thereby blocking the processing of sterol regulatory element-binding proteins (SREBPs). Binds oxysterol, including 25-hydroxycholesterol, regulating interaction with scap and retention of the SCAP-SREBP complex in the endoplasmic reticulum. In presence of oxysterol, interacts with scap, retaining the SCAP-SREBP complex in the endoplasmic reticulum, thereby preventing scap from escorting SREBPs to the Golgi. Sterol deprivation reduces oxysterol-binding, disrupting the interaction between insig1 and scap, thereby promoting Golgi transport of the SCAP-SREBP complex, followed by processing and nuclear translocation of SREBPs. Also regulates cholesterol synthesis by regulating degradation of hmgcr. This is Insulin-induced gene 1 protein from Danio rerio (Zebrafish).